We begin with the raw amino-acid sequence, 104 residues long: Inclusion membrane protein F (104 aa).

2 helical membrane-spanning segments follow: residues 39–59 (LVVALAALVLNGALCVLSLVA) and 70–90 (LAVLVATTLASFLCAACVLFI).

It localises to the secreted. The protein localises to the host vacuole. Its subcellular location is the host pathogen-containing vacuole. The protein resides in the host pathogen-containing vacuole membrane. Functionally, inclusion membrane protein probably involved in early modification events of the chlamydial inclusion. The protein is Inclusion membrane protein F (incF) of Chlamydia trachomatis serovar D (strain ATCC VR-885 / DSM 19411 / UW-3/Cx).